The following is a 185-amino-acid chain: Ethylene-responsive transcription factor ERF017 (185 aa).

Residues 11–68 constitute a DNA-binding region (AP2/ERF); sequence KYKGVRKRKWGKWVSEIRLPNSRERIWLGSYDTPEKAARAFDAALYCLRGNNAKFNFP.

This sequence belongs to the AP2/ERF transcription factor family. ERF subfamily.

The protein localises to the nucleus. Functionally, probably acts as a transcriptional activator. Binds to the GCC-box pathogenesis-related promoter element. May be involved in the regulation of gene expression by stress factors and by components of stress signal transduction pathways. This Arabidopsis thaliana (Mouse-ear cress) protein is Ethylene-responsive transcription factor ERF017 (ERF017).